A 148-amino-acid polypeptide reads, in one-letter code: Sec-independent protein translocase protein TatB (148 aa).

A helical transmembrane segment spans residues 1–21 (MFDIGFWELVVIGIVALVVLG).

This sequence belongs to the TatB family. The Tat system comprises two distinct complexes: a TatABC complex, containing multiple copies of TatA, TatB and TatC subunits, and a separate TatA complex, containing only TatA subunits. Substrates initially bind to the TatABC complex, which probably triggers association of the separate TatA complex to form the active translocon.

It is found in the cell inner membrane. In terms of biological role, part of the twin-arginine translocation (Tat) system that transports large folded proteins containing a characteristic twin-arginine motif in their signal peptide across membranes. Together with TatC, TatB is part of a receptor directly interacting with Tat signal peptides. TatB may form an oligomeric binding site that transiently accommodates folded Tat precursor proteins before their translocation. The chain is Sec-independent protein translocase protein TatB from Aeromonas salmonicida (strain A449).